We begin with the raw amino-acid sequence, 247 residues long: Protein NipSnap homolog 3B (247 aa).

4 positions are modified to N6-succinyllysine: Lys45, Lys48, Lys57, and Lys166.

It belongs to the NipSnap family.

It localises to the cytoplasm. The protein localises to the cytosol. The protein is Protein NipSnap homolog 3B (Nipsnap3b) of Mus musculus (Mouse).